We begin with the raw amino-acid sequence, 178 residues long: Probable DNA-directed RNA polymerase subunit delta (178 aa).

The HTH HARE-type domain occupies 14–81 (LSLIDVAHFI…GNNTWGLRAW (68 aa)). Disordered regions lie at residues 88-122 (DEEV…DYDD) and 141-178 (LDED…PEDK). Composition is skewed to acidic residues over residues 105 to 122 (DDED…DYDD), 141 to 150 (LDEDEDDDDH), and 161 to 178 (TVED…PEDK).

The protein belongs to the RpoE family. RNAP is composed of a core of 2 alpha, a beta and a beta' subunits. The core is associated with a delta subunit and one of several sigma factors.

In terms of biological role, participates in both the initiation and recycling phases of transcription. In the presence of the delta subunit, RNAP displays an increased specificity of transcription, a decreased affinity for nucleic acids, and an increased efficiency of RNA synthesis because of enhanced recycling. The chain is Probable DNA-directed RNA polymerase subunit delta from Listeria monocytogenes serovar 1/2a (strain ATCC BAA-679 / EGD-e).